We begin with the raw amino-acid sequence, 63 residues long: Large ribosomal subunit protein eL29 (63 aa).

Over residues 1–26 the composition is skewed to basic residues; the sequence is MAKSKNHTAHNQTRKAHRNGIKKPKT. The tract at residues 1 to 35 is disordered; the sequence is MAKSKNHTAHNQTRKAHRNGIKKPKTYKYPSLKGV.

This sequence belongs to the eukaryotic ribosomal protein eL29 family. As to quaternary structure, component of the large ribosomal subunit. Mature ribosomes consist of a small (40S) and a large (60S) subunit. The 40S subunit contains about 32 different proteins and 1 molecule of RNA (18S). The 60S subunit contains 45 different proteins and 3 molecules of RNA (25S, 5.8S and 5S).

The protein localises to the cytoplasm. Functionally, component of the ribosome, a large ribonucleoprotein complex responsible for the synthesis of proteins in the cell. The small ribosomal subunit (SSU) binds messenger RNAs (mRNAs) and translates the encoded message by selecting cognate aminoacyl-transfer RNA (tRNA) molecules. The large subunit (LSU) contains the ribosomal catalytic site termed the peptidyl transferase center (PTC), which catalyzes the formation of peptide bonds, thereby polymerizing the amino acids delivered by tRNAs into a polypeptide chain. The nascent polypeptides leave the ribosome through a tunnel in the LSU and interact with protein factors that function in enzymatic processing, targeting, and the membrane insertion of nascent chains at the exit of the ribosomal tunnel. The chain is Large ribosomal subunit protein eL29 from Candida albicans (strain SC5314 / ATCC MYA-2876) (Yeast).